We begin with the raw amino-acid sequence, 584 residues long: DNA ligase (584 aa).

Residue E249 coordinates ATP. The N6-AMP-lysine intermediate role is filled by K251. Residues R256, R271, E301, F341, R416, and K422 each contribute to the ATP site.

Belongs to the ATP-dependent DNA ligase family. Requires Mg(2+) as cofactor.

The enzyme catalyses ATP + (deoxyribonucleotide)n-3'-hydroxyl + 5'-phospho-(deoxyribonucleotide)m = (deoxyribonucleotide)n+m + AMP + diphosphate.. In terms of biological role, DNA ligase that seals nicks in double-stranded DNA during DNA replication, DNA recombination and DNA repair. The chain is DNA ligase from Pyrobaculum neutrophilum (strain DSM 2338 / JCM 9278 / NBRC 100436 / V24Sta) (Thermoproteus neutrophilus).